The following is a 737-amino-acid chain: Protein kinase C epsilon type (737 aa).

The 117-residue stretch at Met1–Ile117 folds into the C2 domain. The residue at position 62 (Ser62) is a Phosphoserine. The Phorbol-ester/DAG-type 1 zinc finger occupies Gly169–Cys220. An Interaction with actin motif is present at residues Leu223–Thr228. Thr228 carries the post-translational modification Phosphothreonine. Ser234 carries the post-translational modification Phosphoserine. The Phorbol-ester/DAG-type 2 zinc finger occupies Pro242–Cys292. Position 309 is a phosphothreonine (Thr309). The interval Pro310 to Leu356 is disordered. A phosphoserine mark is found at Ser316, Ser329, Ser337, and Ser346. Residue Thr349 is modified to Phosphothreonine. Ser350 bears the Phosphoserine; by MAPK11 and MAPK14 mark. A phosphoserine mark is found at Ser368 and Ser388. The interval Phe369–Gly398 is disordered. One can recognise a Protein kinase domain in the interval Phe408–Phe668. ATP contacts are provided by residues Leu414–Val422 and Lys437. Catalysis depends on Asp532, which acts as the Proton acceptor. Thr566 carries the phosphothreonine; by PDPK1 modification. The 69-residue stretch at Lys669–Pro737 folds into the AGC-kinase C-terminal domain. Phosphothreonine occurs at positions 703 and 710. Phosphoserine is present on Ser729.

The protein belongs to the protein kinase superfamily. AGC Ser/Thr protein kinase family. PKC subfamily. As to quaternary structure, forms a ternary complex with TRIM63 and RACK1/GN2BL1. Can form a complex with PDLIM5 and N-type calcium channel. Interacts with COPB1. Interacts with DGKQ. Interacts with STAT3. Interacts with YWHAB. Interacts with HSP90AB1; promotes functional activation in a heat shock-dependent manner. Interacts (via phorbol-ester/DAG-type 2 domain) with PRPH and VIM. Interacts with NLRP5/MATER. In terms of processing, phosphorylation on Thr-566 by PDPK1 triggers autophosphorylation on Ser-729. Phosphorylation in the hinge domain at Ser-350 by MAPK11 or MAPK14, Ser-346 by GSK3B and Ser-368 by autophosphorylation is required for interaction with YWHAB. In response to growth factors, phosphorylated at Thr-703 and Ser-729 by the mTORC2 complex, promoting autophosphorylation and activation of PRKCE.

It localises to the cytoplasm. Its subcellular location is the cytoskeleton. The protein localises to the cell membrane. The protein resides in the perinuclear region. It is found in the nucleus. The enzyme catalyses L-seryl-[protein] + ATP = O-phospho-L-seryl-[protein] + ADP + H(+). It carries out the reaction L-threonyl-[protein] + ATP = O-phospho-L-threonyl-[protein] + ADP + H(+). Novel PKCs (PRKCD, PRKCE, PRKCH and PRKCQ) are calcium-insensitive, but activated by diacylglycerol (DAG) and phosphatidylserine. Three specific sites; Thr-566 (activation loop of the kinase domain), Thr-710 (turn motif) and Ser-729 (hydrophobic region), need to be phosphorylated for its full activation. In terms of biological role, calcium-independent, phospholipid- and diacylglycerol (DAG)-dependent serine/threonine-protein kinase that plays essential roles in the regulation of multiple cellular processes linked to cytoskeletal proteins, such as cell adhesion, motility, migration and cell cycle, functions in neuron growth and ion channel regulation, and is involved in immune response, cancer cell invasion and regulation of apoptosis. Mediates cell adhesion to the extracellular matrix via integrin-dependent signaling, by mediating angiotensin-2-induced activation of integrin beta-1 (ITGB1) in cardiac fibroblasts. Phosphorylates MARCKS, which phosphorylates and activates PTK2/FAK, leading to the spread of cardiomyocytes. Involved in the control of the directional transport of ITGB1 in mesenchymal cells by phosphorylating vimentin (VIM), an intermediate filament (IF) protein. In epithelial cells, associates with and phosphorylates keratin-8 (KRT8), which induces targeting of desmoplakin at desmosomes and regulates cell-cell contact. Phosphorylates IQGAP1, which binds to CDC42, mediating epithelial cell-cell detachment prior to migration. During cytokinesis, forms a complex with YWHAB, which is crucial for daughter cell separation, and facilitates abscission by a mechanism which may implicate the regulation of RHOA. In cardiac myocytes, regulates myofilament function and excitation coupling at the Z-lines, where it is indirectly associated with F-actin via interaction with COPB1. During endothelin-induced cardiomyocyte hypertrophy, mediates activation of PTK2/FAK, which is critical for cardiomyocyte survival and regulation of sarcomere length. Plays a role in the pathogenesis of dilated cardiomyopathy via persistent phosphorylation of troponin I (TNNI3). Involved in nerve growth factor (NFG)-induced neurite outgrowth and neuron morphological change independently of its kinase activity, by inhibition of RHOA pathway, activation of CDC42 and cytoskeletal rearrangement. May be involved in presynaptic facilitation by mediating phorbol ester-induced synaptic potentiation. Phosphorylates gamma-aminobutyric acid receptor subunit gamma-2 (GABRG2), which reduces the response of GABA receptors to ethanol and benzodiazepines and may mediate acute tolerance to the intoxicating effects of ethanol. Upon PMA treatment, phosphorylates the capsaicin- and heat-activated cation channel TRPV1, which is required for bradykinin-induced sensitization of the heat response in nociceptive neurons. Is able to form a complex with PDLIM5 and N-type calcium channel, and may enhance channel activities and potentiates fast synaptic transmission by phosphorylating the pore-forming alpha subunit CACNA1B (CaV2.2). Downstream of TLR4, plays an important role in the lipopolysaccharide (LPS)-induced immune response by phosphorylating and activating TICAM2/TRAM, which in turn activates the transcription factor IRF3 and subsequent cytokines production. In differentiating erythroid progenitors, is regulated by EPO and controls the protection against the TNFSF10/TRAIL-mediated apoptosis, via BCL2. May be involved in the regulation of the insulin-induced phosphorylation and activation of AKT1. Phosphorylates NLRP5/MATER and may thereby modulate AKT pathway activation in cumulus cells. Phosphorylates and activates LRRK1, which phosphorylates RAB proteins involved in intracellular trafficking. This is Protein kinase C epsilon type (Prkce) from Rattus norvegicus (Rat).